The primary structure comprises 128 residues: Small ribosomal subunit protein uS9 (128 aa).

Belongs to the universal ribosomal protein uS9 family. As to quaternary structure, part of the 30S ribosomal subunit. Contacts proteins S7 and S10.

Functionally, part of the top of the head of the 30S subunit. The C-terminal region penetrates the head emerging in the P-site where it contacts tRNA. The protein is Small ribosomal subunit protein uS9 (rpsI) of Thermus thermophilus (strain ATCC BAA-163 / DSM 7039 / HB27).